We begin with the raw amino-acid sequence, 407 residues long: Putative metabolite transport protein HI_1104 (407 aa).

Residues 1 to 16 lie on the Cytoplasmic side of the membrane; sequence MTNKVNSYGWKALIGS. A helical transmembrane segment spans residues 17–37; sequence AVGYGMDGFDLLILGFMLSAI. The Periplasmic portion of the chain corresponds to 38 to 48; the sequence is SADLNLTPAQG. The chain crosses the membrane as a helical span at residues 49 to 69; sequence GSLVTWTLIGAVFGGILFGAL. Over 70 to 77 the chain is Cytoplasmic; that stretch reads SDKYGRVR. The helical transmembrane segment at 78 to 98 threads the bilayer; sequence VLTWTILLFAVFTGLCAIAQG. The Periplasmic portion of the chain corresponds to 99-107; the sequence is YWDLLIYRT. The helical transmembrane segment at 108-128 threads the bilayer; sequence IAGIGLGGEFGIGMALAAEAW. Over 129 to 138 the chain is Cytoplasmic; that stretch reads PARHRAKAAS. Residues 139–159 traverse the membrane as a helical segment; sequence YVALGWQVGVLGAALLTPLLL. Pro-160 is a topological domain (periplasmic). Residues 161-181 form a helical membrane-spanning segment; that stretch reads HIGWRGMFLVGIFPAFVAWFL. Residues 182-224 are Cytoplasmic-facing; that stretch reads RSHLHEPEIFTQKQTALSTQSSFTDKLRSFQLLIKDKATSKIS. The chain crosses the membrane as a helical span at residues 225–245; the sequence is LGIVVLTSVQNFGYYGIMIWL. Topologically, residues 246–261 are periplasmic; the sequence is PNFLSKQLGFSLTKSG. Residues 262–282 traverse the membrane as a helical segment; that stretch reads LWTAVTVCGMMAGIWIFGQLA. At 283–288 the chain is on the cytoplasmic side; that stretch reads DRIGRK. A helical membrane pass occupies residues 289-309; the sequence is PSFLLFQLGAVISIVVYSQLT. Residues 310–312 lie on the Periplasmic side of the membrane; that stretch reads DPD. Residues 313 to 333 traverse the membrane as a helical segment; that stretch reads IMLLAGAFLGMFVNGMLGGYG. Topologically, residues 334-357 are cytoplasmic; the sequence is ALMAEAYPTEARATAQNVLFNIGR. A run of 2 helical transmembrane segments spans residues 358 to 378 and 379 to 399; these read AVGG…SFQT and AIAL…FLIP. Over 400-407 the chain is Cytoplasmic; that stretch reads ELKGKALD.

It belongs to the major facilitator superfamily. Aromatic acid:H(+) symporter (AAHS) (TC 2.A.1.15) family.

The protein localises to the cell inner membrane. The polypeptide is Putative metabolite transport protein HI_1104 (Haemophilus influenzae (strain ATCC 51907 / DSM 11121 / KW20 / Rd)).